Here is a 400-residue protein sequence, read N- to C-terminus: Argininosuccinate synthase (400 aa).

ATP contacts are provided by residues 10–18 (AYSGGVDTS) and Ala38. Residue Tyr89 coordinates L-citrulline. Gly119 contacts ATP. Residues Thr121, Asn125, and Asp126 each contribute to the L-aspartate site. Asn125 contributes to the L-citrulline binding site. Residues Arg129, Ser177, Ser186, Glu262, and Tyr274 each coordinate L-citrulline.

This sequence belongs to the argininosuccinate synthase family. Type 1 subfamily. In terms of assembly, homotetramer.

The protein resides in the cytoplasm. The catalysed reaction is L-citrulline + L-aspartate + ATP = 2-(N(omega)-L-arginino)succinate + AMP + diphosphate + H(+). Its pathway is amino-acid biosynthesis; L-arginine biosynthesis; L-arginine from L-ornithine and carbamoyl phosphate: step 2/3. This chain is Argininosuccinate synthase, found in Trichormus variabilis (strain ATCC 29413 / PCC 7937) (Anabaena variabilis).